The chain runs to 141 residues: Cystatin-S (141 aa).

Residues 1-20 (MARPLCTLLLLMATLAGALA) form the signal peptide. A phosphoserine mark is found at Ser21 and Ser23. Positions 76–80 (QTFGG) match the Secondary area of contact motif. 2 disulfide bridges follow: Cys94-Cys104 and Cys118-Cys138.

This sequence belongs to the cystatin family. Post-translationally, phosphorylated at both its N- and C-terminal regions. Expressed in submandibular and sublingual saliva but not in parotid saliva (at protein level). Expressed in saliva, tears, urine and seminal fluid.

Its subcellular location is the secreted. In terms of biological role, this protein strongly inhibits papain and ficin, partially inhibits stem bromelain and bovine cathepsin C, but does not inhibit porcine cathepsin B or clostripain. Papain is inhibited non-competitively. The sequence is that of Cystatin-S (CST4) from Homo sapiens (Human).